The chain runs to 134 residues: Large ribosomal subunit protein eL32 (134 aa).

This sequence belongs to the eukaryotic ribosomal protein eL32 family.

This is Large ribosomal subunit protein eL32 (rpl32e) from Picrophilus torridus (strain ATCC 700027 / DSM 9790 / JCM 10055 / NBRC 100828 / KAW 2/3).